The chain runs to 1122 residues: MALSRGTSLILHEDPEKTPSPNSCEVPGIMSNTTPRPTPDLTLAPLPAHGVALAPALHPALSPDPEGVSGPVPNDISNPNASGAATPSSIQINTADTDDQSLDHTPKPNLAGTLCPDSQPVPSLSSTQATVLSPENSIKPLSEDIPKSFSSKVFGLGQSNSNPSRPEPNLYIRALSREALVRSHTISRQSSQTPLLLPSNTSLDRLHSGNISKVNLGRAQNSNEAITLTSHTIFASVSKEALSASWNTGSKGSVNVTSNSQPRSGLNVTVTHASHVSLIPGSSEGLSLHSSAQVPNSTLSPSSCMTLIMGSESLSMDSSFVVTDTSTLTLSSHRDYSEDNSIRTMPLEENLGKWDSLQGVTAFRSPPEGTSEDAKANESEKRDHDNDTALVENIISYQKNQDEVEVTGEKETTVKMMMRKIQEEPLDSLLSPARRQAMEILAQLSHTKPILSVRERVELVNTCVRSVFSLPSVQAMQEKDESKAEVIQTLYHQTLDSLQKLLNALFIEDPTPAGLKSILEPLGPWMNSGKVHERARAVNSNVSVLNYTLVTLPFFVSSGFPTLGLLLGRLLLRIGDPDEEIGREALDGITILYTILDLQKRTKNKEEINKKELYETNKRFLGPYNPASPCQNILRVIAEFGDFLGPQQVRDLLLAALEGLKDISETQGKDSIEMMQLASEVMLSSVLEWYRHRALEVIPEIMQGIYMQLSHIQEPRAREVALLPISFLASSFMTEVVVALLMCPLPLDSNGAEMWRQLILRKPSCDVRDLLDLLLTSLKEKPVTKKGRASIVPLAAASGLCELLSVNSCVGRVRRIYPQLLLALLIQVHYHIGLNLPSRVAPRKDSKDDIQPPLFVPVRWMVKVVKTLLLKMGCSYESAFLEEQGGWELMGQAESHYRAVSLLARAMVHYSCQELCRILYLLIPLLERGDERHKITATAFFVELFRMEQVRRIPEEYSLGRMVEGLSHRDPIMKVLSIRGLVILARRSEKMTKVQGLLPSMVKSLKNMDGVLVMEAVHDLKTIFKGQAKKLTDNSVYIEMLQTLLPHFIDARETVRTSCINTYGKVVKKLRMPRTQAMEEQLTSTLMPLLFIIQEGNAKVSQHFPLEFHTAGIFFLLVCRNV.

Disordered regions lie at residues 1-144 and 183-203; these read MALS…LSED and SHTI…NTSL. Low complexity predominate over residues 33 to 65; that stretch reads TTPRPTPDLTLAPLPAHGVALAPALHPALSPDP. Polar residues-rich tracts occupy residues 75–95, 120–136, and 184–203; these read DISN…INTA, PVPS…SPEN, and HTIS…NTSL. Residues Asn200, Asn210, Asn255, Asn267, and Asn296 are each glycosylated (N-linked (GlcNAc...) asparagine). The interval 246–265 is disordered; the sequence is WNTGSKGSVNVTSNSQPRSG. A Phosphoserine modification is found at Ser356. The tract at residues 363–385 is disordered; that stretch reads FRSPPEGTSEDAKANESEKRDHD. Over residues 372 to 385 the composition is skewed to basic and acidic residues; it reads EDAKANESEKRDHD. Residues Asn541 and Asn546 are each glycosylated (N-linked (GlcNAc...) asparagine). A run of 2 helical transmembrane segments spans residues 548-568 and 722-742; these read TLVT…LLLG and LLPI…ALLM. 4 HEAT repeats span residues 913–950, 992–1029, 1035–1072, and 1080–1117; these read QELC…MEQV, TKVQ…GQAK, SVYI…KLRM, and EQLT…FFLL.

It localises to the membrane. This chain is Maestro heat-like repeat-containing protein family member 7 (Mroh7), found in Rattus norvegicus (Rat).